The sequence spans 962 residues: MDEQALLGLNPNADSDFRQRALAYFEQLKISPDAWQVCAEALAQRTYSDDHVKFFCFQVLEHQVKYKYSELTTVQQQLIRETLISWLQAQMLNPQPEKTFIRNKAAQVFALLFVTEYLTKWPKFFFDILSVVDLNPRGVDLYLRILMAIDSELVDRDVVHTSEEARRNTLIKDTMREQCIPNLVESWYQILQNYQYTNSEVTCQCLEVVGAYVSWIDLSLIANDRFINMLLGHMSIEVLREEACDCLFEVVNKGMDPVDKMKLVESLCQVLQSAGFFSIDQEEDVDFLARFSKLVNGMGQSLIVSWSKLIKNGDIKNAQEALQAIETKVALMLQLLIHEDDDISSNIIGFCYDYLHILKQLTVLSDQQKANVEAIMLAVMKKLTYDEEYNFENEGEDGAMFVEYRKQLKLLLDRLAQVSPELLLASVRRVFTSTLQNWQTTRFMEVEVAIRLLYMLAEALPVSHGAHFSGDVSKASALQDMMRTLVTSGVSSYQHTSVTLEFFETVVRYEKFFTVEPQHIPCVLMAFLDHRGLRHSSAKVRSRTAYLFSRFVKSLNKQMNPFIEDILNRIQDLLELSPPENGHQSLLSSDDQLFIYETAGVLIVNSEYPAERKQALMRNLLTPLMEKFKILLEKLMLAQDEERQASLADCLNHAVGFASRTSKAFSNKQTVKQCGCSEVYLDCLQTFLPALSCPLQKDILRSGVRTFLHRMIICLEEEVLPFIPSASEHMLKDCEAKDLQEFIPLINQITAKFKIQVSPFLQQMFMPLLHAIFEVLLRPAEENDQSAALEKQMLRRSYFAFLQTVTSSGMSEVIANQGAENVERVLVTVIQGAVEYPDPIAQKTCFIILSKLVELWGGKDGPVGFADFVYKHIVPACFLAPLKQTFDLADAQTVLALSECAVTLKTIHLKRGPECVQYLQQEYLPSLQVAPEIIQEFCQALQQPDAKVFKNYLKVFFQRAKP.

N-acetylmethionine is present on Met-1. Lys-634 carries the post-translational modification N6-acetyllysine.

Found in a complex with XPOT, Ran and tRNA. Probably found in a complex with nucleoporins. Interacts with Ran and tRNA in a GTP-dependent manner.

The protein localises to the nucleus. Its subcellular location is the cytoplasm. Functionally, mediates the nuclear export of aminoacylated tRNAs. In the nucleus binds to tRNA and to the GTPase Ran in its active GTP-bound form. Docking of this trimeric complex to the nuclear pore complex (NPC) is mediated through binding to nucleoporins. Upon transit of a nuclear export complex into the cytoplasm, disassembling of the complex and hydrolysis of Ran-GTP to Ran-GDP (induced by RANBP1 and RANGAP1, respectively) cause release of the tRNA from the export receptor. XPOT then return to the nuclear compartment and mediate another round of transport. The directionality of nuclear export is thought to be conferred by an asymmetric distribution of the GTP- and GDP-bound forms of Ran between the cytoplasm and nucleus. This is Exportin-T (XPOT) from Pongo abelii (Sumatran orangutan).